The following is a 540-amino-acid chain: NAD(P)H-quinone oxidoreductase subunit 2 B, chloroplastic (540 aa).

Helical transmembrane passes span 24–44 (LLLF…GLIL), 57–77 (IPWL…ALLF), 99–119 (IFQF…VEYI), 124–144 (MAIT…MFLC), 149–169 (FITI…LSGY), 183–203 (YLLM…WLYG), 227–247 (PGIS…LSPA), 325–345 (WHLL…LIAI), 353–373 (MLAY…IVGD), 384–404 (YMLF…LFGL), 425–445 (ALSL…AGFF), 448–468 (LYLF…IGLL), and 514–534 (MIVC…IIAI).

The protein belongs to the complex I subunit 2 family. As to quaternary structure, NDH is composed of at least 16 different subunits, 5 of which are encoded in the nucleus.

The protein resides in the plastid. The protein localises to the chloroplast thylakoid membrane. The catalysed reaction is a plastoquinone + NADH + (n+1) H(+)(in) = a plastoquinol + NAD(+) + n H(+)(out). It catalyses the reaction a plastoquinone + NADPH + (n+1) H(+)(in) = a plastoquinol + NADP(+) + n H(+)(out). Functionally, NDH shuttles electrons from NAD(P)H:plastoquinone, via FMN and iron-sulfur (Fe-S) centers, to quinones in the photosynthetic chain and possibly in a chloroplast respiratory chain. The immediate electron acceptor for the enzyme in this species is believed to be plastoquinone. Couples the redox reaction to proton translocation, and thus conserves the redox energy in a proton gradient. This chain is NAD(P)H-quinone oxidoreductase subunit 2 B, chloroplastic, found in Coffea arabica (Arabian coffee).